A 1372-amino-acid polypeptide reads, in one-letter code: MDSKDFTQLNLEEHSYKVNREKLPIDSYIQYGGFTYANFTPYIIHGDDGFGEHKQLNWTNKLLWNKLGKLNIKDTQILMQNNISEEQHNELISLEAQKIARENLADRINYLQNINTSIDFKLWKMNKENLERQELLLRQINELKEEIKSLKNIPSTVAIIPTNTYTINMIRTETEDWKYFKYIEKELVQNKTEAIAKILDNSYIINDNLGLLYERYEEINPTPKPYKRPETIFDTPQYAKYIRNQKRQEEYEKQQELKKENENKEYQEFLEWKEKQQKDKGKGIQTVYPTLIIPDIKPEKQKKEDMMLEMIKNLQNELEQLKIQRHKEHEKQAELTKIQMLEEELEEELDPDNLEKEVLNNIQNIQISSDISESSEINEISDNETEQISGSDSDYNNEQINVKIEGEEYEYKDNYRYYKPQPPYYKKDIRRERQYKGQSSQRADYIKNRREQFESTYQANMNTTINDSGEILNLDCTTPEEAEDRIQKWTQSMSIALVKQQLSNEQAKQFIRRTFIGNVKEWYKNLTNEAKQKLEGNAPLLSLTHMELGLRAEFGKLGIESDVEKHEKKTSIARHKILQLQICSMDHQNLNAYLCEFQEYYYSANYTEAESENILNMFYSKLPEPWGQQVLNGYLSEIKGKNLLDSIGARMTYLQEFISDKCKENWTQKQARKIQLSKNLDCSYYEVGKYGCKQIRPHKRKRYYKKYIPIKRKYFNKKRYKKYYRPKKFLKRKNPHKACKCYNCGEEGHISPNCKKPKKKTRINNLEALEFKNTEMENLEFETNKNDIIWVEEIEVIQPLHYEEEEKYKGNYSDRILQNPYYINSISIEELDNLDWEFEYQEDIEDDLEYQNFVYQESNDNWYSDQENWYSDEQYLGIYMFIGETSGENNQDNMEGIIKEYNKTEPEKINKIIFTSEKFKQIMENDLNMTKDKIFHNNKLKKLFGKKEIEYYIVTDIEHPIDVKYVQNQDKIINLPLYNQEIFENEIQKIPDKDQNKIRNIHLAAVEIVVKAYFREGIDTPFEIILCDDRITYPQEGSLVEVLIGNLIYQKVKFTKIINYSISIEDKNLDKSLVMYWNLEGIKMIKDSKIFSIRLRNLYVLSNKHIVKNKKQYNGNIIIEPIFQDVIQNNNRNYIEYGKPGKFDRTKLKSYSRRFNEPLRLDDRTNIQREKDQIEKADHNLELQKELNNLNYYSQQGQSSNVLDIPKILKIENTKNNYKQFHIIGKITEGRLNKFYPILIDTGAADSYISSKILEDEKLVSNKLSKVVTSYNADNEKHIYDRNTEVIIELIDKNNEKYKINFIGLVDQLRLLEGGKAEILLGMNILQNLKPYCITDDYLEINLGFRCIKINRIKKDIFEIREDLQQMNVLNE.

2 coiled-coil regions span residues 126-153 (NKEN…LKNI) and 299-350 (EKQK…EELD). The disordered stretch occupies residues 372–398 (SESSEINEISDNETEQISGSDSDYNNE). Residues 386-398 (EQISGSDSDYNNE) show a composition bias toward polar residues. A CCHC-type zinc finger spans residues 739–756 (CKCYNCGEEGHISPNCKK). The stretch at 1162 to 1189 (DDRTNIQREKDQIEKADHNLELQKELNN) forms a coiled coil.

The protein resides in the virion. In Cassava vein mosaic virus (CsVMV), this protein is Putative Polyprotein CP.